Reading from the N-terminus, the 85-residue chain is Serine protease inhibitor Kazal-type 7 (85 aa).

The first 19 residues, 1–19, serve as a signal peptide directing secretion; the sequence is MKITGGLLLLCTVVYFCSS. Positions 26-85 constitute a Kazal-like domain; it reads SPKKVDCSIYKKYPVVAIPCPITYLPVCGSDYITYGNECHLCTESLKSNGRVQFLHDGSC. Disulfide bonds link Cys32–Cys67, Cys45–Cys64, and Cys53–Cys85.

It is found in the secreted. In terms of biological role, probable serine protease inhibitor. The chain is Serine protease inhibitor Kazal-type 7 (SPINK7) from Homo sapiens (Human).